The primary structure comprises 539 residues: Phosphoenolpyruvate carboxykinase (ATP) (539 aa).

Substrate contacts are provided by Arg61, Tyr195, and Lys201. ATP contacts are provided by residues Lys201, His220, and 238 to 246; that span reads GLSGTGKTT. Mn(2+)-binding residues include Lys201 and His220. Asp259 contacts Mn(2+). Residues Glu287, Arg325, and Thr450 each coordinate ATP. Arg325 contributes to the substrate binding site.

The protein belongs to the phosphoenolpyruvate carboxykinase (ATP) family. It depends on Mn(2+) as a cofactor.

It is found in the cytoplasm. The catalysed reaction is oxaloacetate + ATP = phosphoenolpyruvate + ADP + CO2. It participates in carbohydrate biosynthesis; gluconeogenesis. Its function is as follows. Involved in the gluconeogenesis. Catalyzes the conversion of oxaloacetate (OAA) to phosphoenolpyruvate (PEP) through direct phosphoryl transfer between the nucleoside triphosphate and OAA. The polypeptide is Phosphoenolpyruvate carboxykinase (ATP) (Methylobacterium radiotolerans (strain ATCC 27329 / DSM 1819 / JCM 2831 / NBRC 15690 / NCIMB 10815 / 0-1)).